Reading from the N-terminus, the 174-residue chain is D(1B) dopamine receptor (174 aa).

Residues S1 to V10 traverse the membrane as a helical segment. At D11–L32 the chain is on the cytoplasmic side. A helical transmembrane segment spans residues V33–W54. The Extracellular portion of the chain corresponds to H55 to R96. The segment at G64–E88 is disordered. N-linked (GlcNAc...) asparagine glycosylation occurs at N95. Residues T97–T119 form a helical membrane-spanning segment. At R120–K169 the chain is on the cytoplasmic side. Residues T170–I174 traverse the membrane as a helical segment.

The protein belongs to the G-protein coupled receptor 1 family.

It localises to the cell membrane. Its function is as follows. Dopamine receptor whose activity is mediated by G proteins which activate adenylyl cyclase. The sequence is that of D(1B) dopamine receptor (DRD5) from Bos taurus (Bovine).